Consider the following 212-residue polypeptide: Hemagglutinin 2 (212 aa).

Its subcellular location is the secreted. Induces agglutination of neuraminidase-treated erythrocytes. This is Hemagglutinin 2 (hag2) from Eikenella corrodens.